The sequence spans 512 residues: Putative aldehyde-dehydrogenase-like protein y4uC (512 aa).

A disordered region spans residues 14–41; sequence MKPERGRRSPLPRRPTRPPDERSSGIGN. Position 266-271 (266-271) interacts with NADP(+); that stretch reads GGFATG. Catalysis depends on residues E286 and C320.

This sequence belongs to the aldehyde dehydrogenase family.

It functions in the pathway amino-acid degradation; 4-aminobutanoate degradation. In terms of biological role, could be a succinate-semialdehyde dehydrogenase (NADP(+)). The protein is Putative aldehyde-dehydrogenase-like protein y4uC of Sinorhizobium fredii (strain NBRC 101917 / NGR234).